The sequence spans 429 residues: MNNLKNLRGTVDLLPDNLIKWQNVEKIILELLLRASVKEIRTPILEMTELFMRGIGEGTDVVSKEMYTFLDRGERSCTLRPEGTASVARAIIQNGISSKSLQKLWYMGPMFRYERPQAGRQRQFHQLGVEFIGYDSVRSDIEIIALAWDILEKLGIKELNLEINTLGDFNDRSNFQKAFLKWLEVNKNDLDLDSQNRIVKNPLRIFDTKNAKTKSILEDAPKLFDFLSEKSLKRYINIKEMLKLLKIPFIENFNLVRGLDYYTHTAFEITSGALGSQATVCGGGRYDNLINQMGGTETPAIGFAIGLERLILLAGKDLEESRETDIYIVNKGFQAEILAIDLSRKLRNYDLIIELDLSGASFSKQFKKANKLKSKSIIIIGDDEALKNEFKIRLFNNINVENHEANISFEDDIKLEKWLKTNFLLDKNL.

This sequence belongs to the class-II aminoacyl-tRNA synthetase family. In terms of assembly, homodimer.

Its subcellular location is the cytoplasm. The catalysed reaction is tRNA(His) + L-histidine + ATP = L-histidyl-tRNA(His) + AMP + diphosphate + H(+). The sequence is that of Histidine--tRNA ligase from Prochlorococcus marinus (strain MIT 9515).